We begin with the raw amino-acid sequence, 740 residues long: ATP-dependent RNA helicase DDX1 (740 aa).

The interval Met-1–Ser-295 is necessary for interaction with HNRNPK. Residues Met-1–Val-448 form an interaction with dsRNA region. The necessary for interaction with RELA stretch occupies residues Met-1–Tyr-525. Residues Ala-2 to Trp-428 enclose the Helicase ATP-binding domain. ATP is bound at residue Ala-46–Thr-53. Residues Asp-70–Phe-247 enclose the B30.2/SPRY domain. 2 positions are modified to N6-acetyllysine: Lys-239 and Lys-268. Lys-281 bears the N6-acetyllysine; alternate mark. A Glycyl lysine isopeptide (Lys-Gly) (interchain with G-Cter in SUMO2); alternate cross-link involves residue Lys-281. A DEAD box motif is present at residues Asp-370–Asp-373. Phosphoserine is present on Ser-481. A Helicase C-terminal domain is found at Lys-493–Val-681. Residues Tyr-525–Phe-740 form a necessary for interaction with HNRNPK region.

It belongs to the DEAD box helicase family. DDX1 subfamily. In terms of assembly, found in a multi-helicase-TICAM1 complex at least composed of DHX36, DDX1, DDX21 and TICAM1; this complex exists in resting cells with or without poly(I:C) RNA ligand stimulation. Interacts with DHX36. Interacts (via B30.2/SPRY domain) with DDX21 (via N-terminus); this interaction serves as bridges to TICAM1. Interacts with FAM98A (via N- and C-terminus). Interacts with PHF5A (via C-terminus). Interacts with MBNL1. Interacts with CSTF2. Interacts with HNRNPK. Interacts with ATM. Interacts with RELA (via C-terminus). Component of the tRNA-splicing ligase complex. Interacts with PQBP1. Interacts with ERCC6. In terms of processing, phosphorylated by ATM kinase; phosphorylation is increased in response to ionizing radiation (IR).

The protein localises to the nucleus. It localises to the cytoplasm. It is found in the cytoplasmic granule. Its subcellular location is the cytosol. The protein resides in the mitochondrion. The enzyme catalyses ATP + H2O = ADP + phosphate + H(+). Functionally, acts as an ATP-dependent RNA helicase, able to unwind both RNA-RNA and RNA-DNA duplexes. Possesses 5' single-stranded RNA overhang nuclease activity. Possesses ATPase activity on various RNA, but not DNA polynucleotides. May play a role in RNA clearance at DNA double-strand breaks (DSBs), thereby facilitating the template-guided repair of transcriptionally active regions of the genome. Together with RELA, acts as a coactivator to enhance NF-kappa-B-mediated transcriptional activation. Acts as a positive transcriptional regulator of cyclin CCND2 expression. Binds to the cyclin CCND2 promoter region. Associates with chromatin at the NF-kappa-B promoter region via association with RELA. Binds to poly(A) RNA. May be involved in 3'-end cleavage and polyadenylation of pre-mRNAs. Component of the tRNA-splicing ligase complex required to facilitate the enzymatic turnover of catalytic subunit RTCB: together with archease (ZBTB8OS), acts by facilitating the guanylylation of RTCB, a key intermediate step in tRNA ligation. Component of a multi-helicase-TICAM1 complex that acts as a cytoplasmic sensor of viral double-stranded RNA (dsRNA) and plays a role in the activation of a cascade of antiviral responses including the induction of pro-inflammatory cytokines via the adapter molecule TICAM1. Specifically binds (via helicase ATP-binding domain) on both short and long poly(I:C) dsRNA. This chain is ATP-dependent RNA helicase DDX1 (DDX1), found in Macaca fascicularis (Crab-eating macaque).